The following is a 168-amino-acid chain: tRNA (cytidine(56)-2'-O)-methyltransferase (168 aa).

S-adenosyl-L-methionine contacts are provided by residues Leu-79 and 104 to 108 (GAEKV).

Belongs to the aTrm56 family. In terms of assembly, homodimer.

It localises to the cytoplasm. It catalyses the reaction cytidine(56) in tRNA + S-adenosyl-L-methionine = 2'-O-methylcytidine(56) in tRNA + S-adenosyl-L-homocysteine + H(+). Functionally, specifically catalyzes the AdoMet-dependent 2'-O-ribose methylation of cytidine at position 56 in tRNAs. This chain is tRNA (cytidine(56)-2'-O)-methyltransferase, found in Archaeoglobus fulgidus (strain ATCC 49558 / DSM 4304 / JCM 9628 / NBRC 100126 / VC-16).